The sequence spans 1083 residues: Solute carrier family 12 member 7 (1083 aa).

The disordered stretch occupies residues Met-1 to Asn-55. The Cytoplasmic segment spans residues Met-1–Gly-119. A compositionally biased stretch (basic and acidic residues) spans Ala-12–Glu-27. A phosphoserine mark is found at Ser-30 and Ser-33. Thr-37 is subject to Phosphothreonine. 2 positions are modified to phosphoserine: Ser-50 and Ser-62. The discontinuously helical transmembrane segment at Thr-120–Thr-142 threads the bilayer. Residues Asn-131 and Ile-132 each coordinate K(+). Val-135 contributes to the chloride binding site. The Extracellular portion of the chain corresponds to Trp-143–Gly-149. The chain crosses the membrane as a helical span at residues Val-150 to Ser-172. Residues Ala-173–Glu-196 are Cytoplasmic-facing. Residues Phe-197 to Leu-225 form a helical membrane-spanning segment. Over Thr-226 to Asn-249 the chain is Extracellular. 2 helical membrane passes run Asn-250–Lys-271 and Tyr-272–Phe-300. Residues Ala-301–Tyr-419 are Extracellular-facing. N-linked (GlcNAc...) (high mannose) asparagine glycosylation occurs at Asn-312. Residues Asn-331 and Asn-344 are each glycosylated (N-linked (GlcNAc...) (complex) asparagine). An N-linked (GlcNAc...) (high mannose) asparagine glycan is attached at Asn-360. Residues Phe-420 to Arg-440 form a helical membrane-spanning segment. Positions 429 and 432 each coordinate K(+). Residue Pro-429 coordinates chloride. The chloride site is built by Gly-433 and Ile-434. At Ser-441–Ser-450 the chain is on the cytoplasmic side. A helical membrane pass occupies residues Ile-451 to Phe-473. The Extracellular portion of the chain corresponds to Gly-474–Pro-504. A helical membrane pass occupies residues Trp-505–Gln-531. At Ala-532–Pro-554 the chain is on the cytoplasmic side. Transmembrane regions (helical) follow at residues Thr-555–Ser-573 and Leu-574–Val-598. Tyr-589 is a chloride binding site. Residues Gln-599–Lys-612 are Cytoplasmic-facing. 2 consecutive transmembrane segments (helical) span residues Phe-613–Trp-635 and Tyr-636–Tyr-651. Residues Ile-652–Ser-1083 are Cytoplasmic-facing. The tract at residues Gly-664–Val-680 is scissor helix. 2 positions are modified to phosphothreonine: Thr-973 and Thr-980.

Belongs to the SLC12A transporter family. K/Cl co-transporter subfamily. As to quaternary structure, homodimer; adopts a domain-swap conformation at the scissor helices connecting the transmembrane domain and C-terminal domain. Heterodimer with K-Cl cotransporter SLC12A5. In terms of processing, glycosylation at Asn-331 and Asn-344 is required for proper trafficking to the cell surface, and augments protein stability. As to expression, detected in proximal tubules in the kidney, in particular in basolateral membranes of intercalated cells in the cortical collecting duct.

The protein localises to the cell membrane. The catalysed reaction is K(+)(in) + chloride(in) = K(+)(out) + chloride(out). Activated by N-ethylmaleimide (NEM). Inhibited by furosemide, DIDS and bumetanide. The inhibition is much stronger in the presence of 50 mM K(+) in the uptake medium. Inhibited by DIOA. Inhibited by WNK3. Mediates electroneutral potassium-chloride cotransport when activated by cell swelling. May mediate K(+) uptake into Deiters' cells in the cochlea and contribute to K(+) recycling in the inner ear. Important for the survival of cochlear outer and inner hair cells and the maintenance of the organ of Corti. May be required for basolateral Cl(-) extrusion in the kidney and contribute to renal acidification. In Mus musculus (Mouse), this protein is Solute carrier family 12 member 7 (Slc12a7).